Consider the following 362-residue polypeptide: 3-isopropylmalate dehydrogenase (362 aa).

78–91 (GYKWDSLPPHQRPE) provides a ligand contact to NAD(+). The substrate site is built by R98, R108, R136, and D226. D226, D250, and D254 together coordinate Mg(2+). 284 to 296 (GSAPDIAGQDKAN) provides a ligand contact to NAD(+).

The protein belongs to the isocitrate and isopropylmalate dehydrogenases family. LeuB type 1 subfamily. In terms of assembly, homodimer. It depends on Mg(2+) as a cofactor. The cofactor is Mn(2+).

The protein resides in the cytoplasm. The enzyme catalyses (2R,3S)-3-isopropylmalate + NAD(+) = 4-methyl-2-oxopentanoate + CO2 + NADH. Its pathway is amino-acid biosynthesis; L-leucine biosynthesis; L-leucine from 3-methyl-2-oxobutanoate: step 3/4. Catalyzes the oxidation of 3-carboxy-2-hydroxy-4-methylpentanoate (3-isopropylmalate) to 3-carboxy-4-methyl-2-oxopentanoate. The product decarboxylates to 4-methyl-2 oxopentanoate. This is 3-isopropylmalate dehydrogenase from Nostoc sp. (strain PCC 7120 / SAG 25.82 / UTEX 2576).